Consider the following 88-residue polypeptide: Small ribosomal subunit protein bS16c (88 aa).

Belongs to the bacterial ribosomal protein bS16 family.

It is found in the plastid. The protein resides in the chloroplast. This is Small ribosomal subunit protein bS16c from Gossypium barbadense (Sea Island cotton).